The sequence spans 192 residues: Per os infectivity factor 6 (192 aa).

A helical transmembrane segment spans residues 154–174 (IAYVFLFFICIVLLSVLAVFF).

The protein localises to the host membrane. The protein resides in the virion. Its subcellular location is the host cytoplasm. It is found in the host nucleus. Per os infectivity factor. This is Per os infectivity factor 6 (AC68) from Autographa californica nuclear polyhedrosis virus (AcMNPV).